The following is a 298-amino-acid chain: Probable deoxyhypusine synthase 2 (298 aa).

Catalysis depends on Lys259, which acts as the Nucleophile.

It belongs to the deoxyhypusine synthase family. The cofactor is NAD(+).

It catalyses the reaction [eIF5A protein]-L-lysine + spermidine = [eIF5A protein]-deoxyhypusine + propane-1,3-diamine. It functions in the pathway protein modification; eIF5A hypusination. Its function is as follows. Catalyzes the NAD-dependent oxidative cleavage of spermidine and the subsequent transfer of the butylamine moiety of spermidine to the epsilon-amino group of a specific lysine residue of the eIF-5A precursor protein to form the intermediate deoxyhypusine residue. In Archaeoglobus fulgidus (strain ATCC 49558 / DSM 4304 / JCM 9628 / NBRC 100126 / VC-16), this protein is Probable deoxyhypusine synthase 2 (dys2).